The sequence spans 833 residues: Leucine--tRNA ligase (833 aa).

Positions 41-52 (PYPSGAGLHVGH) match the 'HIGH' region motif. The short motif at 610–614 (KMSKS) is the 'KMSKS' region element. Position 613 (Lys-613) interacts with ATP.

It belongs to the class-I aminoacyl-tRNA synthetase family.

It localises to the cytoplasm. It catalyses the reaction tRNA(Leu) + L-leucine + ATP = L-leucyl-tRNA(Leu) + AMP + diphosphate. This Streptococcus equi subsp. zooepidemicus (strain MGCS10565) protein is Leucine--tRNA ligase.